The chain runs to 299 residues: Glycerol-3-phosphate dehydrogenase [NAD(P)+] (299 aa).

Residues Trp-11, Arg-30, His-31, and Lys-79 each coordinate NADPH. Sn-glycerol 3-phosphate contacts are provided by Lys-79, Gly-107, and Ser-109. Ala-111 contacts NADPH. Residues Lys-161, Asp-214, Ser-224, Arg-225, and Asn-226 each contribute to the sn-glycerol 3-phosphate site. The active-site Proton acceptor is Lys-161. NADPH is bound at residue Arg-225. NADPH contacts are provided by Val-249 and Glu-251.

The protein belongs to the NAD-dependent glycerol-3-phosphate dehydrogenase family.

Its subcellular location is the cytoplasm. The enzyme catalyses sn-glycerol 3-phosphate + NAD(+) = dihydroxyacetone phosphate + NADH + H(+). It carries out the reaction sn-glycerol 3-phosphate + NADP(+) = dihydroxyacetone phosphate + NADPH + H(+). It participates in membrane lipid metabolism; glycerophospholipid metabolism. Catalyzes the reduction of the glycolytic intermediate dihydroxyacetone phosphate (DHAP) to sn-glycerol 3-phosphate (G3P), the key precursor for phospholipid synthesis. In Nitratiruptor sp. (strain SB155-2), this protein is Glycerol-3-phosphate dehydrogenase [NAD(P)+].